We begin with the raw amino-acid sequence, 156 residues long: FAD synthase (156 aa).

ATP contacts are provided by residues 9–10 (TF), 14–17 (HPGH), asparagine 92, and histidine 119.

Belongs to the archaeal FAD synthase family. In terms of assembly, homodimer. The cofactor is a divalent metal cation.

It carries out the reaction FMN + ATP + H(+) = FAD + diphosphate. It functions in the pathway cofactor biosynthesis; FAD biosynthesis; FAD from FMN: step 1/1. Catalyzes the transfer of the AMP portion of ATP to flavin mononucleotide (FMN) to produce flavin adenine dinucleotide (FAD) coenzyme. In Methanospirillum hungatei JF-1 (strain ATCC 27890 / DSM 864 / NBRC 100397 / JF-1), this protein is FAD synthase.